The following is a 787-amino-acid chain: Bifunctional dethiobiotin synthetase/adenosylmethionine-8-amino-7-oxononanoate aminotransferase (787 aa).

An ATP-binding site is contributed by 23-28 (DVGKTI). Residue T27 participates in Mg(2+) binding. Residue T54 participates in substrate binding. Positions 61 and 123 each coordinate Mg(2+). Residues 123–126 (ETAG) and 184–185 (KD) each bind ATP. 323–324 (WW) serves as a coordination point for (8S)-8-amino-7-oxononanoate. Position 384–385 (384–385 (GS)) interacts with pyridoxal 5'-phosphate. Residue Y421 participates in (8S)-8-amino-7-oxononanoate binding. D582 provides a ligand contact to pyridoxal 5'-phosphate. (8S)-8-amino-7-oxononanoate-binding residues include K611 and G645. 646 to 647 (HS) serves as a coordination point for pyridoxal 5'-phosphate. R756 contributes to the (8S)-8-amino-7-oxononanoate binding site.

In the N-terminal section; belongs to the dethiobiotin synthetase family. It in the C-terminal section; belongs to the class-III pyridoxal-phosphate-dependent aminotransferase family. BioA subfamily. As to quaternary structure, homodimer. It depends on Mg(2+) as a cofactor. The cofactor is pyridoxal 5'-phosphate.

The protein localises to the mitochondrion matrix. The enzyme catalyses (7R,8S)-7,8-diammoniononanoate + CO2 + ATP = (4R,5S)-dethiobiotin + ADP + phosphate + 3 H(+). It carries out the reaction (8S)-8-amino-7-oxononanoate + S-adenosyl-L-methionine = S-adenosyl-4-methylsulfanyl-2-oxobutanoate + (7R,8S)-7,8-diammoniononanoate. It functions in the pathway cofactor biosynthesis; biotin biosynthesis; biotin from 7,8-diaminononanoate: step 1/2. Its pathway is cofactor biosynthesis; biotin biosynthesis; 7,8-diaminononanoate from 8-amino-7-oxononanoate (SAM route): step 1/1. Functionally, bifunctional enzyme; part of the cluster involved in the biosynthesis of biotin (also known as vitamin B8 or vitamin H), a water-soluble vitamin that functions as a prosthetic group of many carboxylases, such as acetyl-CoA carboxylase and pyruvate carboxylase. Catalyzes a mechanistically unusual reaction, the ATP-dependent insertion of CO2 between the N7 and N8 nitrogen atoms of 7,8-diaminopelargonic acid (DAPA) to form an ureido ring. Also catalyzes the transfer of the alpha-amino group from S-adenosyl-L-methionine (SAM) to 7-keto-8-aminopelargonic acid (KAPA) to form 7,8-diaminopelargonic acid (DAPA). It is the only animotransferase known to utilize SAM as an amino donor. The polypeptide is Bifunctional dethiobiotin synthetase/adenosylmethionine-8-amino-7-oxononanoate aminotransferase (Emericella nidulans (strain FGSC A4 / ATCC 38163 / CBS 112.46 / NRRL 194 / M139) (Aspergillus nidulans)).